Reading from the N-terminus, the 207-residue chain is ATP synthase subunit b 2 (207 aa).

A helical transmembrane segment spans residues 58 to 78 (LLWLVITFGVFYLLMQKVIAP).

It belongs to the ATPase B chain family. F-type ATPases have 2 components, F(1) - the catalytic core - and F(0) - the membrane proton channel. F(1) has five subunits: alpha(3), beta(3), gamma(1), delta(1), epsilon(1). F(0) has three main subunits: a(1), b(2) and c(10-14). The alpha and beta chains form an alternating ring which encloses part of the gamma chain. F(1) is attached to F(0) by a central stalk formed by the gamma and epsilon chains, while a peripheral stalk is formed by the delta and b chains.

The protein resides in the cell inner membrane. In terms of biological role, f(1)F(0) ATP synthase produces ATP from ADP in the presence of a proton or sodium gradient. F-type ATPases consist of two structural domains, F(1) containing the extramembraneous catalytic core and F(0) containing the membrane proton channel, linked together by a central stalk and a peripheral stalk. During catalysis, ATP synthesis in the catalytic domain of F(1) is coupled via a rotary mechanism of the central stalk subunits to proton translocation. Component of the F(0) channel, it forms part of the peripheral stalk, linking F(1) to F(0). The b'-subunit is a diverged and duplicated form of b found in plants and photosynthetic bacteria. This chain is ATP synthase subunit b 2 (atpF2), found in Rhizobium johnstonii (strain DSM 114642 / LMG 32736 / 3841) (Rhizobium leguminosarum bv. viciae).